The following is a 173-amino-acid chain: Crossover junction endodeoxyribonuclease RuvC (173 aa).

Residues Asp8, Glu67, and Asp139 contribute to the active site. Positions 8, 67, and 139 each coordinate Mg(2+).

This sequence belongs to the RuvC family. Homodimer which binds Holliday junction (HJ) DNA. The HJ becomes 2-fold symmetrical on binding to RuvC with unstacked arms; it has a different conformation from HJ DNA in complex with RuvA. In the full resolvosome a probable DNA-RuvA(4)-RuvB(12)-RuvC(2) complex forms which resolves the HJ. Mg(2+) is required as a cofactor.

It is found in the cytoplasm. The enzyme catalyses Endonucleolytic cleavage at a junction such as a reciprocal single-stranded crossover between two homologous DNA duplexes (Holliday junction).. Functionally, the RuvA-RuvB-RuvC complex processes Holliday junction (HJ) DNA during genetic recombination and DNA repair. Endonuclease that resolves HJ intermediates. Cleaves cruciform DNA by making single-stranded nicks across the HJ at symmetrical positions within the homologous arms, yielding a 5'-phosphate and a 3'-hydroxyl group; requires a central core of homology in the junction. The consensus cleavage sequence is 5'-(A/T)TT(C/G)-3'. Cleavage occurs on the 3'-side of the TT dinucleotide at the point of strand exchange. HJ branch migration catalyzed by RuvA-RuvB allows RuvC to scan DNA until it finds its consensus sequence, where it cleaves and resolves the cruciform DNA. The sequence is that of Crossover junction endodeoxyribonuclease RuvC from Photorhabdus laumondii subsp. laumondii (strain DSM 15139 / CIP 105565 / TT01) (Photorhabdus luminescens subsp. laumondii).